Consider the following 536-residue polypeptide: Lipid scramblase CLPTM1L (536 aa).

Over 1–9 the chain is Cytoplasmic; that stretch reads MLSRSSFTS. A helical membrane pass occupies residues 10-30; sequence LAVGVFAVYVAHTCWVMYGIV. Residues 31 to 284 are Extracellular-facing; the sequence is YTRPCPSGGA…VKGIFVDTNL (254 aa). Asn92, Asn102, and Asn229 each carry an N-linked (GlcNAc...) asparagine glycan. Residues 285–305 form a helical membrane-spanning segment; it reads YFLALTFFVAAFHLLFDFLAF. Residues 306 to 324 lie on the Cytoplasmic side of the membrane; sequence KNDISFWKKKRSMIGMSTK. The helical transmembrane segment at 325-342 threads the bilayer; sequence AVLWRCFSTVVIFLFLLD. At 343-346 the chain is on the extracellular side; the sequence is EQTS. Residues 347–364 traverse the membrane as a helical segment; sequence LLVLIPAGIGAVIELWKV. The Cytoplasmic portion of the chain corresponds to 365 to 402; sequence KKALKMTVKWQGIRPKVQFGASNDSEKKTEEYDTQAMK. Residues 403-423 traverse the membrane as a helical segment; the sequence is YLSYLLYPLCIGGAAYSLLNV. Over 424–428 the chain is Extracellular; that stretch reads KYKSW. A helical membrane pass occupies residues 429-449; it reads YSWLINSFVNGVYAFGFLFML. Residues 450-536 lie on the Cytoplasmic side of the membrane; it reads PQLFVNYKMK…YEEKPKKKSS (87 aa).

This sequence belongs to the CLPTM1 family.

The protein resides in the endoplasmic reticulum membrane. The enzyme catalyses a 6-(alpha-D-glucosaminyl)-1-(1,2-diacyl-sn-glycero-3-phospho)-1D-myo-inositol(in) = a 6-(alpha-D-glucosaminyl)-1-(1,2-diacyl-sn-glycero-3-phospho)-1D-myo-inositol(out). It catalyses the reaction 6-(alpha-D-glucosaminyl)-(1-octadecanoyl,2-(9Z)-octadecenoyl-sn-glycero-3-phospho)-1D-myo-inositol(in) = 6-(alpha-D-glucosaminyl)-(1-octadecanoyl,2-(9Z)-octadecenoyl-sn-glycero-3-phospho)-1D-myo-inositol(out). The catalysed reaction is a 1,2-diacyl-sn-glycero-3-phospho-(1D-myo-inositol)(in) = a 1,2-diacyl-sn-glycero-3-phospho-(1D-myo-inositol)(out). It carries out the reaction a 1,2-diacyl-sn-glycero-3-phosphocholine(in) = a 1,2-diacyl-sn-glycero-3-phosphocholine(out). The enzyme catalyses a 1,2-diacyl-sn-glycero-3-phosphoethanolamine(in) = a 1,2-diacyl-sn-glycero-3-phosphoethanolamine(out). In terms of biological role, scramblase that mediates the translocation of glucosaminylphosphatidylinositol (alpha-D-GlcN-(1-6)-(1,2-diacyl-sn-glycero-3-phospho)-1D-myo-inositol, GlcN-PI) across the endoplasmic reticulum (ER) membrane, from the cytosolic leaflet to the luminal leaflet of the ER membrane, where it participates in the biosynthesis of glycosylphosphatidylinositol (GPI). GPI is a lipid glycoconjugate involved in post-translational modification of proteins. Can also translocate 1,2-diacyl-sn-glycero-3-phospho-(1D-myo-inositol) (phosphatidylinositol or PI), as well as several other phospholipids (1,2-diacyl-sn-glycero-3-phosphocholine, 1,2-diacyl-sn-glycero-3-phosphoethanolamine), and N-acetylglucosaminylphosphatidylinositol (GlcNAc-PI) in vitro. This chain is Lipid scramblase CLPTM1L (CLPTM1L), found in Gallus gallus (Chicken).